A 131-amino-acid chain; its full sequence is UPF0382 inner membrane protein YgdD (131 aa).

Residues 1-4 (MTSR) are Periplasmic-facing. The helical transmembrane segment at 5 to 25 (FMLIFAAISGFIFVALGAFGA) threads the bilayer. The Cytoplasmic segment spans residues 26 to 64 (HVLSKTMGAVEMGWIQTGLEYQAFHTLAILGLAVAMQRR). The chain crosses the membrane as a helical span at residues 65–85 (ISIWFYWSSVFLALGTVLFSG). Topologically, residues 86–97 (SLYCLALSHLRL) are periplasmic. Residues 98 to 118 (WAFVTPVGGVSFLAGWALMLV) form a helical membrane-spanning segment. At 119–131 (GAIRLKRKGVSHE) the chain is on the cytoplasmic side.

Belongs to the UPF0382 family.

The protein resides in the cell inner membrane. The chain is UPF0382 inner membrane protein YgdD (ygdD) from Escherichia coli O157:H7.